The sequence spans 393 residues: Geranylgeranyl pyrophosphate synthase 2 (393 aa).

Isopentenyl diphosphate-binding residues include Lys109, Arg112, and His141. Positions 148 and 152 each coordinate Mg(2+). Arg157 serves as a coordination point for dimethylallyl diphosphate. Arg158 provides a ligand contact to isopentenyl diphosphate. 3 residues coordinate dimethylallyl diphosphate: Lys235, Thr236, and Gln275. Asp278 contributes to the Mg(2+) binding site. Residues Asn282, Lys292, and Lys302 each contribute to the dimethylallyl diphosphate site.

Belongs to the FPP/GGPP synthase family. Mg(2+) serves as cofactor.

It catalyses the reaction isopentenyl diphosphate + dimethylallyl diphosphate = (2E)-geranyl diphosphate + diphosphate. The enzyme catalyses isopentenyl diphosphate + (2E)-geranyl diphosphate = (2E,6E)-farnesyl diphosphate + diphosphate. The catalysed reaction is isopentenyl diphosphate + (2E,6E)-farnesyl diphosphate = (2E,6E,10E)-geranylgeranyl diphosphate + diphosphate. The protein operates within plant hormone biosynthesis; gibberellin biosynthesis. Its function is as follows. Geranylgeranyl pyrophosphate synthase; part of the gene cluster that mediates the biosynthesis of gibberellins (GAs), diterpenoids that may provide a selective advantage during infection of the preferred host plant, rice. Gibberellins (GAs) are diterpenoids and are synthesized via the mevalonate pathway. Biosynthesis of the major metabolite GA3 (gibberellic acid) from geranylgeranyl diphosphate (GGPP) requires 13 steps. The GGPP produced by the geranylgeranyl diphosphate synthase GGS2 is converted to ent-kaurene via ent-copalyldiphosphate in a two-step cyclization reaction performed by the bifunctional ent-copalyl diphosphate synthase/ent-kaurene synthase enzyme (CPS/KS). Ent-Kaurene is metabolized to GAs by a series of oxidation reactions catalyzed by cytochrome P450 monooxygenases. Cytochrome P450 monooxygenase P450-4 is an ent-kaurene oxidase that catalyzes the three oxidation steps between ent-kaurene and ent-kaurenoic acid. The highly multifunctional cytochrome P450 monooxygenase P450-1 then catalyzes four steps involving oxidation at two carbon atoms, in the main pathway from ent-kaurenoic acid to GA14 via GA12-aldehyde as well as producing kaurenolides and fujenoic acids as by-products. The cytochrome P450 monooxygenase P450-2 then converts GA14 to GA4 by removal of C-20. GA4 is further converted to GA7 by the GA4 desaturase DES via 1,2-desaturation before cytochrome P450 monooxygenase P450-3, a 13-hydroxylase, hydroxylates GA7 to GA3, the final product of the GA-biosynthetic pathway. The chain is Geranylgeranyl pyrophosphate synthase 2 from Gibberella fujikuroi (strain CBS 195.34 / IMI 58289 / NRRL A-6831) (Bakanae and foot rot disease fungus).